Here is a 453-residue protein sequence, read N- to C-terminus: uncharacterized protein (453 aa).

This is an uncharacterized protein from Caenorhabditis elegans.